A 287-amino-acid polypeptide reads, in one-letter code: Bifunctional protein FolD (287 aa).

NADP(+)-binding positions include 166 to 168 (GAS) and isoleucine 232.

This sequence belongs to the tetrahydrofolate dehydrogenase/cyclohydrolase family. In terms of assembly, homodimer.

It carries out the reaction (6R)-5,10-methylene-5,6,7,8-tetrahydrofolate + NADP(+) = (6R)-5,10-methenyltetrahydrofolate + NADPH. It catalyses the reaction (6R)-5,10-methenyltetrahydrofolate + H2O = (6R)-10-formyltetrahydrofolate + H(+). The protein operates within one-carbon metabolism; tetrahydrofolate interconversion. Its function is as follows. Catalyzes the oxidation of 5,10-methylenetetrahydrofolate to 5,10-methenyltetrahydrofolate and then the hydrolysis of 5,10-methenyltetrahydrofolate to 10-formyltetrahydrofolate. This Buchnera aphidicola subsp. Baizongia pistaciae (strain Bp) protein is Bifunctional protein FolD.